A 716-amino-acid polypeptide reads, in one-letter code: Beta-galactosidase (716 aa).

Glu-389 functions as the Proton donor in the catalytic mechanism. The active-site Nucleophile is Glu-462.

This sequence belongs to the glycosyl hydrolase 2 family. As to quaternary structure, homodimer.

It catalyses the reaction Hydrolysis of terminal non-reducing beta-D-galactose residues in beta-D-galactosides.. Functionally, displays beta-galactosidase activity with the artificial chromogenic substrate o-nitrophenyl-beta-D-galactopyranoside (ONPG). This is Beta-galactosidase from Thermoanaerobacterium thermosulfurigenes (Clostridium thermosulfurogenes).